Consider the following 910-residue polypeptide: Disease resistance protein RPH8A (910 aa).

A coiled-coil region spans residues 15-57; it reads DLLSRESERLQGIDEQLDGLKRQLRSLQSLLKDADAKKHGSDR. The region spanning 146–459 is the NB-ARC domain; sequence RQRVQREIRQ…AEGIYDGSTI (314 aa). 192–199 is an ATP binding site; sequence GMGGIGKT.

This sequence belongs to the disease resistance NB-LRR family. RPP8/HRT subfamily.

Functionally, disease resistance protein. Resistance proteins guard the plant against pathogens that contain an appropriate avirulence protein via an indirect interaction with this avirulence protein. That triggers a defense system including the hypersensitive response, which restricts the pathogen growth. In contrast to RPP8, it does not specifically recognize the Emco5 avirulence protein from Hyaloperonospora parasitica. The sequence is that of Disease resistance protein RPH8A (RPH8A) from Arabidopsis thaliana (Mouse-ear cress).